The following is a 306-amino-acid chain: Fe-S cluster assembly protein dre2 (306 aa).

The interval 21–150 (NVTQKRSLLL…EKPQYQEAAV (130 aa)) is N-terminal SAM-like domain. The linker stretch occupies residues 151–196 (PLRFGANKRKNKISPEPVKIESVGFVDNYDDDELINEDDLLDEEDL). [2Fe-2S] cluster-binding residues include C206, C218, C221, and C223. A fe-S binding site A region spans residues 206 to 223 (CQPETAKKRRRACKDCTC). [4Fe-4S] cluster is bound by residues C269, C272, C280, and C283. 2 consecutive short sequence motifs (cx2C motif) follow at residues 269-272 (CNSC) and 280-283 (CASC). The interval 269–283 (CNSCSLGDAFRCASC) is fe-S binding site B.

It belongs to the anamorsin family. As to quaternary structure, monomer. Interacts with tah18. Interacts with mia40. It depends on [2Fe-2S] cluster as a cofactor. The cofactor is [4Fe-4S] cluster.

It localises to the cytoplasm. The protein resides in the mitochondrion intermembrane space. Component of the cytosolic iron-sulfur (Fe-S) protein assembly (CIA) machinery required for the maturation of extramitochondrial Fe-S proteins. Part of an electron transfer chain functioning in an early step of cytosolic Fe-S biogenesis, facilitating the de novo assembly of a [4Fe-4S] cluster on the scaffold complex cfd1-nbp35. Electrons are transferred to dre2 from NADPH via the FAD- and FMN-containing protein tah18. Tah18-dre2 are also required for the assembly of the diferric tyrosyl radical cofactor of ribonucleotide reductase (RNR), probably by providing electrons for reduction during radical cofactor maturation in the catalytic small subunit rnr2. The polypeptide is Fe-S cluster assembly protein dre2 (Talaromyces stipitatus (strain ATCC 10500 / CBS 375.48 / QM 6759 / NRRL 1006) (Penicillium stipitatum)).